The following is a 518-amino-acid chain: Myosin-binding protein 7 (518 aa).

The GTD-binding domain occupies asparagine 69–lysine 167. The interval valine 276–methionine 350 is disordered. A compositionally biased stretch (low complexity) spans serine 291–threonine 301. A compositionally biased stretch (polar residues) spans serine 310 to serine 320. Phosphoserine is present on serine 385. Residues glutamate 399–methionine 431 are a coiled coil. A helical transmembrane segment spans residues isoleucine 458–tryptophan 477.

In terms of assembly, interacts with myosin XI-I.

The protein resides in the endomembrane system. Its function is as follows. Membrane-anchored myosin receptors that define a distinct, plant-specific transport vesicle compartment. This chain is Myosin-binding protein 7, found in Arabidopsis thaliana (Mouse-ear cress).